Consider the following 356-residue polypeptide: MNKKNLLSFNQNALNDFFVGLGEKPYRTKQIMQWIYKDHEFDFEKMLNFSKSLRDELSKVVCVELLRVVKQNFILDGVIKWVLALDKNNHIEMIYIPEKNRGTLCISSQVGCGLACTFCSTGMQGFNKNLTTAEIIAQVLIASRYLNSKTKRISNVVFMGMGEPLLNEHAVYNACDLLLDDLAFGLSRRKVTISTSGVVPAMLRMSERTPVSLAVSLHASDDHLRNELVPINQKYSLEELLKACKVYLQAGTQKRHILFEYVMLKGVNDSIEHANKLVKLLKGISAKINLIPFNSFEKTQYQTSSAQTIEKFQNILYHQGIRTMTRRTRGEDIGGACGQLAGKVLDKTKRTYDRRH.

E92 serves as the catalytic Proton acceptor. One can recognise a Radical SAM core domain in the interval 98-327; the sequence is EKNRGTLCIS…HQGIRTMTRR (230 aa). Residues C105 and C337 are joined by a disulfide bond. [4Fe-4S] cluster is bound by residues C112, C116, and C119. S-adenosyl-L-methionine-binding positions include 162–163, S194, 216–218, and N294; these read GE and SLH. C337 functions as the S-methylcysteine intermediate in the catalytic mechanism.

This sequence belongs to the radical SAM superfamily. RlmN family. Requires [4Fe-4S] cluster as cofactor.

The protein localises to the cytoplasm. It catalyses the reaction adenosine(2503) in 23S rRNA + 2 reduced [2Fe-2S]-[ferredoxin] + 2 S-adenosyl-L-methionine = 2-methyladenosine(2503) in 23S rRNA + 5'-deoxyadenosine + L-methionine + 2 oxidized [2Fe-2S]-[ferredoxin] + S-adenosyl-L-homocysteine. It carries out the reaction adenosine(37) in tRNA + 2 reduced [2Fe-2S]-[ferredoxin] + 2 S-adenosyl-L-methionine = 2-methyladenosine(37) in tRNA + 5'-deoxyadenosine + L-methionine + 2 oxidized [2Fe-2S]-[ferredoxin] + S-adenosyl-L-homocysteine. Specifically methylates position 2 of adenine 2503 in 23S rRNA and position 2 of adenine 37 in tRNAs. m2A2503 modification seems to play a crucial role in the proofreading step occurring at the peptidyl transferase center and thus would serve to optimize ribosomal fidelity. This chain is Dual-specificity RNA methyltransferase RlmN, found in Ruthia magnifica subsp. Calyptogena magnifica.